The chain runs to 276 residues: Secretagogin (276 aa).

EF-hand domains follow at residues 12-47, 58-93, 105-140, 149-184, 197-232, and 240-276; these read LDAAGFWQVWQRFDADEKGYIEEKELDAFFLHMLMK, NLHKVKQQFMTTQDASKDGRIRMKELAGMFLSEDEN, DSSVEFMQIWRKYDADSSGFISAAELRNFLRDLFLH, KLEEYTGTMMKIFDRNKDGRLDLNDLARILALQENF, ERKRDFEKIFAYYDVSKTGALEGPEVDGFVKDMMEL, and VDLDKFREILLRHCDVNKDGKIQKSELALCLGLKINP. Ca(2+) is bound by residues Asp-25, Asp-27, Tyr-31, Glu-36, Asp-71, Ser-73, Asp-75, Arg-77, Glu-82, Asp-118, Asp-120, Ser-122, Glu-129, Asp-162, Asn-164, Asp-166, Arg-168, Asp-173, Asp-210, Ser-212, Thr-214, Glu-221, Asp-254, Asn-256, Asp-258, Lys-260, and Glu-265.

In terms of tissue distribution, expressed at high levels in the pancreatic islets of Langerhans and to a much lesser extent in the gastrointestinal tract (stomach, small intestine and colon), the adrenal medulla and cortex and the thyroid C-cells. In the brain, the expression is restricted to distinct subtypes of neurons with highest expression in the molecular layer of the cerebellum (stellate and basket cells), in the anterior part of the pituitary gland, in the thalamus, in the hypothalamus and in a subgroup of neocortical neurons.

It localises to the cytoplasm. Its subcellular location is the secreted. The protein localises to the cytoplasmic vesicle. It is found in the secretory vesicle membrane. The protein is Secretagogin (SCGN) of Homo sapiens (Human).